A 115-amino-acid chain; its full sequence is MFGGIMEFKALFIGVFLIVFLGCIGSTLHYKKQAETTALLLKQSEQTIKQNKVMLQRYETQNAKLTSQLNQANKKAEQRSQQLKDVLNNAENKNWTYGRVPNDVAGVLNHRTQAK.

The helical transmembrane segment at 10–28 (ALFIGVFLIVFLGCIGSTL) threads the bilayer.

It is found in the host membrane. This is an uncharacterized protein from Haemophilus influenzae (Bacteriophage HP1).